Reading from the N-terminus, the 989-residue chain is Phosphoenolpyruvate carboxylase (989 aa).

Catalysis depends on residues His175 and Lys630.

It belongs to the PEPCase type 1 family. Mg(2+) serves as cofactor.

It catalyses the reaction oxaloacetate + phosphate = phosphoenolpyruvate + hydrogencarbonate. Functionally, forms oxaloacetate, a four-carbon dicarboxylic acid source for the tricarboxylic acid cycle. In Prochlorococcus marinus subsp. pastoris (strain CCMP1986 / NIES-2087 / MED4), this protein is Phosphoenolpyruvate carboxylase.